The chain runs to 202 residues: NADH-quinone oxidoreductase subunit B 2 (202 aa).

Cysteine 38, cysteine 39, cysteine 104, and cysteine 133 together coordinate [4Fe-4S] cluster.

The protein belongs to the complex I 20 kDa subunit family. In terms of assembly, NDH-1 is composed of 14 different subunits. Subunits NuoB, C, D, E, F, and G constitute the peripheral sector of the complex. [4Fe-4S] cluster serves as cofactor.

The protein localises to the cell inner membrane. It carries out the reaction a quinone + NADH + 5 H(+)(in) = a quinol + NAD(+) + 4 H(+)(out). Functionally, NDH-1 shuttles electrons from NADH, via FMN and iron-sulfur (Fe-S) centers, to quinones in the respiratory chain. The immediate electron acceptor for the enzyme in this species is believed to be ubiquinone. Couples the redox reaction to proton translocation (for every two electrons transferred, four hydrogen ions are translocated across the cytoplasmic membrane), and thus conserves the redox energy in a proton gradient. In Koribacter versatilis (strain Ellin345), this protein is NADH-quinone oxidoreductase subunit B 2.